Reading from the N-terminus, the 230-residue chain is RING finger protein 141 (230 aa).

Glycine 2 is lipidated: N-myristoyl glycine. The RING-type zinc-finger motif lies at 155 to 192; sequence CCICMDGRADLILPCAHSFCQKCIDKWSDRHRNCPICR.

In terms of tissue distribution, isoform 1 is testis-specific. Isoform 2 is expressed in heart, brain, skeletal muscle, kidney, pancreas, lung, liver and testis. Isoform 3 is expressed in heart, liver, and kidney.

The protein localises to the membrane. In terms of biological role, may be involved in spermatogenesis. The protein is RING finger protein 141 (Rnf141) of Mus musculus (Mouse).